Consider the following 293-residue polypeptide: MSSEPPPRRARGPGEEQNMTEIDAFPRREIFDPTEKYKMDHKRRGIALIFNHERFFWHLTLPNRPGTSADRDNLRRRFSDLGFEVKCFDDLRAEELLLKIHEASTASHVDADCFLCVFLSHGEGNHIYAYDAKIEIQTLTGLFKGDKCQSLVGKPKIFIIQACRGSQHDVPVIPLDVVDHRTDTPDANLTQVDAASVYTLPAGADFLMCYSVAEGYYSHRETVNGSWYIQDLCEMLGKFGSSLEFTELLTLVNRKVSQRRVDFCRDPNAIGKKQVPCFASMLTKKLHFSPKSK.

The segment at 1–20 is disordered; the sequence is MSSEPPPRRARGPGEEQNMT. Residues 1 to 23 constitute a propeptide that is removed on maturation; that stretch reads MSSEPPPRRARGPGEEQNMTEID. The segment at 42 to 44 is tri-arginine exosite; that stretch reads KRR. A Phosphoserine modification is found at Ser79. The active site involves His121. Residues 125 to 142 form a 130's region region; sequence NHIYAYDAKIEIQTLTGL. Residue Cys163 is part of the active site. A propeptide spanning residues 180-193 is cleaved from the precursor; it reads HRTDTPDANLTQVD. Residue Ser257 is modified to Phosphoserine. S-palmitoyl cysteine attachment occurs at residues Cys264 and Cys277.

This sequence belongs to the peptidase C14A family. In terms of assembly, heterotetramer that consists of two anti-parallel arranged heterodimers, each one formed by a 18 kDa (p18) and a 11 kDa (p11) subunits. Interacts with BIRC6/bruce. Interacts with RIPK3. As to quaternary structure, heterotetramer that consists of two anti-parallel arranged heterodimers, each one formed by a 18 kDa (Caspase-6 subunit p18) and a 11 kDa (Caspase-6 subunit p11) subunit. Post-translationally, phosphorylated by NUAK1; phosphorylation inhibits self-activation. Phosphorylation at Ser-257 by AMP-activated protein kinase (PRKAA1 or PRKAA2) inhibits autocleavage, preventing caspase activation, thereby preventing hepatocyte apoptosis. In terms of processing, palmitoylation by ZDHHC17 blocks dimerization and subsequent activation, leading to inhibit the cysteine protease activity. Can be cleaved and activated by different caspases, depending on the context. Cleaved and activated by caspase-8 (CASP8) and subsequently by caspase-3 (CASP3). Can also undergo autoactivation by mediating autocleavage at Asp-179 and Asp-193, while it is not able to cleave its N-terminal disordered prodomain. Cleaved and activated by CASP1, possibly in the context of inflammation.

It localises to the cytoplasm. The protein localises to the nucleus. It catalyses the reaction Strict requirement for Asp at position P1 and has a preferred cleavage sequence of Val-Glu-His-Asp-|-.. Its activity is regulated as follows. During activation, the N-terminal disordered prodomain is removed by cleavage. Concomitantly, double cleavage gives rise to a large 18-kDa and a small 11-kDa subunit. The two large and two small subunits then assemble to form the active CASP6 complex. Can be cleaved and activated by different caspases, depending on the context. Cleaved and activated by caspase-8 (CASP8) and subsequently by caspase-3 (CASP3). Can also undergo autoactivation by mediating autocleavage at Asp-179 and Asp-193, while it is not able to cleave its N-terminal disordered prodomain. Intramolecular cleavage at Asp-193 is a prerequisite for CASP6 self-activation. Cleaved and activated by CASP1 in neurons, possibly in the context of inflammation. Phosphorylation at Ser-257 inhibits autocleavage, preventing caspase activation. Cysteine protease that plays essential roles in programmed cell death, axonal degeneration, development and innate immunity. Acts as a non-canonical executioner caspase during apoptosis: localizes in the nucleus and cleaves the nuclear structural protein NUMA1 and lamin A/LMNA thereby inducing nuclear shrinkage and fragmentation. Lamin-A/LMNA cleavage is required for chromatin condensation and nuclear disassembly during apoptotic execution. Acts as a regulator of liver damage by promoting hepatocyte apoptosis: in absence of phosphorylation by AMP-activated protein kinase (AMPK), catalyzes cleavage of BID, leading to cytochrome c release, thereby participating in nonalcoholic steatohepatitis. Cleaves PARK7/DJ-1 in cells undergoing apoptosis. Involved in intrinsic apoptosis by mediating cleavage of RIPK1. Furthermore, cleaves many transcription factors such as NF-kappa-B and cAMP response element-binding protein/CREBBP. Cleaves phospholipid scramblase proteins XKR4 and XKR9. In addition to apoptosis, involved in different forms of programmed cell death. Plays an essential role in defense against viruses by acting as a central mediator of the ZBP1-mediated pyroptosis, apoptosis, and necroptosis (PANoptosis), independently of its cysteine protease activity. PANoptosis is a unique inflammatory programmed cell death, which provides a molecular scaffold that allows the interactions and activation of machinery required for inflammasome/pyroptosis, apoptosis and necroptosis. Mechanistically, interacts with RIPK3 and enhances the interaction between RIPK3 and ZBP1, leading to ZBP1-mediated inflammasome activation and cell death. Plays an essential role in axon degeneration during axon pruning which is the remodeling of axons during neurogenesis but not apoptosis. Regulates B-cell programs both during early development and after antigen stimulation. This Bos taurus (Bovine) protein is Caspase-6.